The primary structure comprises 198 residues: ATP-dependent Clp protease proteolytic subunit 1 (198 aa).

Ser-98 functions as the Nucleophile in the catalytic mechanism. His-123 is an active-site residue.

Belongs to the peptidase S14 family. In terms of assembly, fourteen ClpP subunits assemble into 2 heptameric rings which stack back to back to give a disk-like structure with a central cavity, resembling the structure of eukaryotic proteasomes.

The protein localises to the cytoplasm. The enzyme catalyses Hydrolysis of proteins to small peptides in the presence of ATP and magnesium. alpha-casein is the usual test substrate. In the absence of ATP, only oligopeptides shorter than five residues are hydrolyzed (such as succinyl-Leu-Tyr-|-NHMec, and Leu-Tyr-Leu-|-Tyr-Trp, in which cleavage of the -Tyr-|-Leu- and -Tyr-|-Trp bonds also occurs).. Its function is as follows. Cleaves peptides in various proteins in a process that requires ATP hydrolysis. Has a chymotrypsin-like activity. Plays a major role in the degradation of misfolded proteins. The sequence is that of ATP-dependent Clp protease proteolytic subunit 1 from Leptospira interrogans serogroup Icterohaemorrhagiae serovar copenhageni (strain Fiocruz L1-130).